Consider the following 184-residue polypeptide: Shikimate kinase (184 aa).

Gly-15–Ser-20 provides a ligand contact to ATP. Thr-19 is a binding site for Mg(2+). Substrate contacts are provided by Asp-37, Arg-61, and Gly-83. Position 123 (Arg-123) interacts with ATP. Arg-142 contributes to the substrate binding site.

Belongs to the shikimate kinase family. As to quaternary structure, monomer. It depends on Mg(2+) as a cofactor.

The protein resides in the cytoplasm. It carries out the reaction shikimate + ATP = 3-phosphoshikimate + ADP + H(+). Its pathway is metabolic intermediate biosynthesis; chorismate biosynthesis; chorismate from D-erythrose 4-phosphate and phosphoenolpyruvate: step 5/7. Catalyzes the specific phosphorylation of the 3-hydroxyl group of shikimic acid using ATP as a cosubstrate. The polypeptide is Shikimate kinase (Coxiella burnetii (strain CbuK_Q154) (Coxiella burnetii (strain Q154))).